The chain runs to 282 residues: tRNA N(3)-cytidine methyltransferase METTL6 (282 aa).

Residues tryptophan 45, tyrosine 49, glycine 87, aspartate 110, aspartate 136, leucine 137, and isoleucine 157 each coordinate S-adenosyl-L-methionine.

The protein belongs to the methyltransferase superfamily. METL family. Monomer. Interacts with SARS1/SerRS; interaction is mediated via tRNA(Ser) and is required for N(3)-methylcytidine methylation.

The protein resides in the cytoplasm. It is found in the nucleus. The catalysed reaction is cytidine(32) in tRNA(Ser) + S-adenosyl-L-methionine = N(3)-methylcytidine(32) in tRNA(Ser) + S-adenosyl-L-homocysteine + H(+). In terms of biological role, S-adenosyl-L-methionine-dependent methyltransferase that mediates N(3)-methylcytidine modification of residue 32 of the tRNA anticodon loop of tRNA(Ser), including tRNA(Ser)(UGA) and tRNA(Ser)(GCU). Interaction with SARS1/SerRS is required for N(3)-methylcytidine methylation. This chain is tRNA N(3)-cytidine methyltransferase METTL6 (METTL6), found in Pongo abelii (Sumatran orangutan).